A 304-amino-acid chain; its full sequence is Quorum-quenching protein AidA (304 aa).

This sequence belongs to the AB hydrolase superfamily.

In terms of biological role, involved in quorum quenching (QQ). Inhibits motility and biofilm formation. Could contribute in bacterial competition, as it is capable of hydrolyzing the signaling molecules that mediate interspecies communication. This is Quorum-quenching protein AidA from Acinetobacter baumannii (strain MDR-ZJ06).